The chain runs to 1807 residues: Triacetic acid lactone synthase cle1 (1807 aa).

One can recognise a Starter acyltransferase (SAT) domain in the interval 107–280; it reads LAPLTVIIHI…ANVPVNGRYH (174 aa). The Ketosynthase family 3 (KS3) domain maps to 385–795; that stretch reads DTSIAIIGAA…GNNTAIIICQ (411 aa). Residues C540, H675, and H718 each act as for beta-ketoacyl synthase activity in the active site. Positions 919-1176 constitute a Malonyl-CoA:ACP transacylase (MAT) domain; the sequence is SKAVYDSSYH…LGPCIWLEAG (258 aa). Residues 1272-1398 form an N-terminal hotdog fold region; that stretch reads PVIDGLISLE…GTVIVDDERT (127 aa). In terms of domain architecture, PKS/mFAS DH spans 1272–1573; it reads PVIDGLISLE…FIRTSTSALQ (302 aa). The Proton acceptor; for dehydratase activity role is filled by H1304. Positions 1416–1573 are C-terminal hotdog fold; the sequence is TVFSAPRGVA…FIRTSTSALQ (158 aa). Catalysis depends on D1475, which acts as the Proton donor; for dehydratase activity. Residues 1605-1679 enclose the Carrier 1 domain; it reads ANVWSLTVNL…IICERITAQT (75 aa). The residue at position 1639 (S1639) is an O-(pantetheine 4'-phosphoryl)serine. Positions 1690–1720 are disordered; that stretch reads GNSTSNTTSSSSQCTPSSSFESDSDTQATEL. Residues 1692–1710 show a composition bias toward low complexity; sequence STSNTTSSSSQCTPSSSFE. Residues 1721-1797 form the Carrier 2 domain; that stretch reads SLSAPTMEKV…DLHALVMRRG (77 aa). The residue at position 1757 (S1757) is an O-(pantetheine 4'-phosphoryl)serine.

Pantetheine 4'-phosphate serves as cofactor.

It functions in the pathway secondary metabolite biosynthesis; terpenoid biosynthesis. Non-reducing polyketide synthase; part of the cluster A that mediates the biosynthesis of chevalone E and its oxidized derivatives that possess a unique five-membered lactone ring and can synergistically enhance the cytotoxicity of doxorubicin (DOX) in breast cancer cells. Within the pathway, cle1 takes part to the biosynthesis of the molecular scaffold via the synthesis the alpha-pyrone triacetic acid lactone (TAL) from one molecule of acetyl-CoA and two molecules of malonyl-CoA. The molecular scaffold is commonly biosynthesized by a series of enzymes including the non-reducing polyketide synthase (NR-PKS) cle1 that produces the alpha-pyrone triacetic acid lactone (TAL); The membrane-bound prenyltransferase cle5 that accepts TAL as its substrate to perform a C-3 geranylgeranylation reaction, in which the pathway-dedicated GGPS cle6 is required to provide GGPP, the other substrate of cle5; the FAD-dependent monooxygenase Cle3 that forms an (S)-epoxide ring at the terminal olefin of the geranylgeranyl group; and the terpene cyclase Cle7 that catalyzes the cyclization of the prenyl group that yields the pentacyclic pathway intermediate chevalone E. Chevalone E can derivatize into seven new oxidized analogs by the cytochrome P450 monooxygenases cle2 (acting at C-20) and cle4 (acting at C-11 and C-12). This Aspergillus versicolor protein is Triacetic acid lactone synthase cle1.